The sequence spans 140 residues: Coiled-coil domain-containing protein 126 (140 aa).

Positions 1–26 are cleaved as a signal peptide; sequence MFFTISRKNMSQKLSLLLLVFGLIWG. Asn110 and Asn134 each carry an N-linked (GlcNAc...) asparagine glycan. A disordered region spans residues 120-140; sequence TSGNLVPVTTNKRTNVSGSIR.

It is found in the secreted. This is Coiled-coil domain-containing protein 126 (CCDC126) from Homo sapiens (Human).